Reading from the N-terminus, the 224-residue chain is MPDNPTGTLPEIILASASPRRRQILSEMGFVFSVCPSQAELYPDGSVAPAEFAVLNAQIKAKDIASKYSNGLIIAADTIVVDDFGILGKPSSKKVALNYLSRLGGKPHTVISSVCLLNAENGQIRSATCQSTLTMRPYTQAEAQRYVDSGLPMDKAGAYGIQDKEFNPAENIQGCYLNVVGLPACTLVRLINEMGFNPKLARNWKPEGDCTLCRIYRTEISRLR.

D77 acts as the Proton acceptor in catalysis.

It belongs to the Maf family. YhdE subfamily. Requires a divalent metal cation as cofactor.

Its subcellular location is the cytoplasm. The enzyme catalyses dTTP + H2O = dTMP + diphosphate + H(+). The catalysed reaction is UTP + H2O = UMP + diphosphate + H(+). In terms of biological role, nucleoside triphosphate pyrophosphatase that hydrolyzes dTTP and UTP. May have a dual role in cell division arrest and in preventing the incorporation of modified nucleotides into cellular nucleic acids. The protein is dTTP/UTP pyrophosphatase of Dehalococcoides mccartyi (strain CBDB1).